Consider the following 283-residue polypeptide: (+)-borneol dehydrogenase 2 (283 aa).

NAD(+) is bound by residues 27 to 33, Asp-51, 76 to 77, and 103 to 105; these read GGSSGIG, DV, and NAG. The Proton donor role is filled by Ser-157. Positions 170, 174, and 205 each coordinate NAD(+). Tyr-170 (proton acceptor) is an active-site residue. Lys-174 (proton donor/acceptor) is an active-site residue.

This sequence belongs to the short-chain dehydrogenases/reductases (SDR) family.

The catalysed reaction is (1R,2S,4R)-borneol + NAD(+) = (1R,4R)-camphor + NADH + H(+). In terms of biological role, involved in the biosynthesis of monoterpene natural products related to camphor. Catalayzes the oxidation of (+)-borneol to (+)-camphor. Shows absolute selectivity towards (+)-borneol. Catalyzes the oxidation of (+)-isoborneol to (-)-camphor. Shows absolute selectivity towards (+)-isoborneol. The protein is (+)-borneol dehydrogenase 2 of Salvia officinalis (Sage).